The sequence spans 101 residues: Large ribosomal subunit protein uL24 (101 aa).

The protein belongs to the universal ribosomal protein uL24 family. Part of the 50S ribosomal subunit.

In terms of biological role, one of two assembly initiator proteins, it binds directly to the 5'-end of the 23S rRNA, where it nucleates assembly of the 50S subunit. Functionally, one of the proteins that surrounds the polypeptide exit tunnel on the outside of the subunit. The polypeptide is Large ribosomal subunit protein uL24 (Borrelia hermsii (strain HS1 / DAH)).